We begin with the raw amino-acid sequence, 392 residues long: MALIRLGFGRQHFCLLKRRSFLMLKLAALVFAVVLFCEFLIYYLVIFRCDWPEVKTPASDSGQKTLKAMFLADTHLLGEVRGHWLDKLRREWQMERAFQTALRLLQPEVVFILGDIFDEGKWSSSQAWADDVERFQKIFRHPRHVQLKVVAGNHDIGFHYQMNAYKIKRFEKVFSPERLFSWKGINFVMVNSVALEGDGCHICSEAEAELIEISRKLNCSRKQERRSGPCPDPQLLPASAPVLLQHFPLYRRSDANCSGEDAAPLEERGIPFKERYDVLSQEASQQLLWWLRPRLILSGHTHSACEVLHGAEVPEISVPSFSWRNRNNPSFIMGSMTPTEYALAKCYLPYEDTVLATYCVAAGLLVVLILVHSELLPSPFLFGWNLLRKFKT.

A helical membrane pass occupies residues 25 to 45 (KLAALVFAVVLFCEFLIYYLV). A divalent metal cation contacts are provided by Asp-73, Asp-115, Asn-153, His-246, His-300, and His-302. The chain crosses the membrane as a helical span at residues 352 to 372 (DTVLATYCVAAGLLVVLILVH).

Belongs to the metallophosphoesterase superfamily. MPPE1 family. Interacts with GPI-anchor proteins (via the GPI portion). Interacts with TMED10. The cofactor is Mn(2+).

It localises to the endoplasmic reticulum-Golgi intermediate compartment membrane. Functionally, metallophosphoesterase that catalyzes the removal of a side-chain ethanolamine-phosphate (EtNP) from the second mannose of the GPI-anchor protein intermediate. Participates in the glycan remodeling steps of GPI-anchor maturation to allow an efficient transport of GPI-anchor proteins from the endoplasmic reticulum to the Golgi. The chain is Metallophosphoesterase 1 from Ailuropoda melanoleuca (Giant panda).